The chain runs to 250 residues: 2,3-bisphosphoglycerate-dependent phosphoglycerate mutase (250 aa).

Residues 8 to 15 (RHGQSAWN), 21 to 22 (TG), R60, 87 to 90 (ERHY), K98, 114 to 115 (RR), and 183 to 184 (GN) contribute to the substrate site. The active-site Tele-phosphohistidine intermediate is the H9. The active-site Proton donor/acceptor is the E87.

This sequence belongs to the phosphoglycerate mutase family. BPG-dependent PGAM subfamily. Homodimer.

The catalysed reaction is (2R)-2-phosphoglycerate = (2R)-3-phosphoglycerate. Its pathway is carbohydrate degradation; glycolysis; pyruvate from D-glyceraldehyde 3-phosphate: step 3/5. In terms of biological role, catalyzes the interconversion of 2-phosphoglycerate and 3-phosphoglycerate. In Nitratidesulfovibrio vulgaris (strain ATCC 29579 / DSM 644 / CCUG 34227 / NCIMB 8303 / VKM B-1760 / Hildenborough) (Desulfovibrio vulgaris), this protein is 2,3-bisphosphoglycerate-dependent phosphoglycerate mutase.